We begin with the raw amino-acid sequence, 442 residues long: MEASRCRLSPSGDSVFHEEMMKMRQAKLDYQRLLLEKRQRKKRLEPFMVQPNPEARLRRAKPRASDEQTPLVNCHTPHSNVILHGIDGPAAVLKPDEVHAPSVSSSVVEEDAENTVDTASKPGLQERLQKHDISESVNFDEETDGISQSACLERPNSASSQNSTDTGTSGSATAAQPADNLLGDIDDLEDFVYSPAPQGVTVRCRIIRDKRGMDRGLFPTYYMYLEKEENQKIFLLAARKRKKSKTANYLISIDPVDLSREGESYVGKLRSNLMGTKFTVYDRGICPMKGRGLVGAAHTRQELAAISYETNVLGFKGPRKMSVIIPGMTLNHKQIPYQPQNNHDSLLSRWQNRTMENLVELHNKAPVWNSDTQSYVLNFRGRVTQASVKNFQIVHKNDPDYIVMQFGRVADDVFTLDYNYPLCAVQAFGIGLSSFDSKLACE.

Residues 23 to 68 form a required for association with the IFT complex A (IFT-A) region; it reads MRQAKLDYQRLLLEKRQRKKRLEPFMVQPNPEARLRRAKPRASDEQ. The segment at 101-177 is disordered; the sequence is PSVSSSVVEE…TSGSATAAQP (77 aa). The segment covering 145–162 has biased composition (polar residues); the sequence is GISQSACLERPNSASSQN. A compositionally biased stretch (low complexity) spans 163-175; that stretch reads STDTGTSGSATAA.

Belongs to the TUB family. Associates with the IFT complex A (IFT-A). Interacts with SIRT1. Expressed at high levels in testis, ovaries, thyroid, and spinal cord.

The protein localises to the nucleus. It localises to the cell membrane. The protein resides in the cell projection. Its subcellular location is the cilium. It is found in the cytoplasm. The protein localises to the secreted. Functionally, negative regulator of the Shh signaling transduction pathway: recruited to primary cilia via association with the IFT complex A (IFT-A) and is required for recruitment of G protein-coupled receptor GPR161 to cilia, a promoter of PKA-dependent basal repression machinery in Shh signaling. Binds to phosphorylated inositide (phosphoinositide) lipids. Both IFT-A- and phosphoinositide-binding properties are required to regulate ciliary G protein-coupled receptor trafficking. During adipogenesis, regulates ciliary trafficking of FFAR4 in preadipocytes. This Homo sapiens (Human) protein is Tubby-related protein 3.